We begin with the raw amino-acid sequence, 307 residues long: N-acetylglucosaminyl-diphospho-decaprenol L-rhamnosyltransferase (307 aa).

The protein belongs to the glycosyltransferase 2 family. Requires Mn(2+) as cofactor. It depends on Mg(2+) as a cofactor.

It carries out the reaction N-acetyl-alpha-D-glucosaminyl-1-diphospho-trans,octa-cis-decaprenol + dTDP-beta-L-rhamnose = alpha-L-rhamnosyl-(1-&gt;3)-N-acetyl-alpha-D-glucosaminyl-diphospho-trans,octa-cis-decaprenol + dTDP + H(+). Its function is as follows. Involved in the biosynthesis of the mycolylarabinogalactan-peptidoglycan (mAGP) complex, an essential component of the mycobacterial cell wall. Catalyzes the transfer of the rhamnosyl moiety from dTDP-rhamnosyl (dTDP-Rha) onto the decaprenyl-pyrophosphoryl-GlcNAc (C50-PP-GlcNAc), yielding rhamnosyl-decaprenyl-pyrophosphoryl-GlcNAc (Rha-C50-PP-GlcNAc). The sequence is that of N-acetylglucosaminyl-diphospho-decaprenol L-rhamnosyltransferase (wbbL) from Mycobacterium tuberculosis (strain CDC 1551 / Oshkosh).